The chain runs to 355 residues: Uroporphyrinogen decarboxylase (355 aa).

Residues R27–R31, D77, Y154, T209, and H328 each bind substrate.

It belongs to the uroporphyrinogen decarboxylase family. In terms of assembly, homodimer.

Its subcellular location is the cytoplasm. The catalysed reaction is uroporphyrinogen III + 4 H(+) = coproporphyrinogen III + 4 CO2. It functions in the pathway porphyrin-containing compound metabolism; protoporphyrin-IX biosynthesis; coproporphyrinogen-III from 5-aminolevulinate: step 4/4. Functionally, catalyzes the decarboxylation of four acetate groups of uroporphyrinogen-III to yield coproporphyrinogen-III. This Vibrio cholerae serotype O1 (strain ATCC 39541 / Classical Ogawa 395 / O395) protein is Uroporphyrinogen decarboxylase.